The sequence spans 808 residues: Transcription activator of gluconeogenesis PAAG_01030 (808 aa).

Residues 1 to 90 (MTSSVRNGSP…SAKDPLRPRR (90 aa)) are disordered. The segment covering 69–83 (STSSTAASANNASAK) has biased composition (low complexity). The zn(2)-C6 fungal-type DNA-binding region spans 97–125 (CFACQRAHLTCGDERPCQRCIKRGLQDTC). Residues 158-170 (AARNKVNSNSQQR) show a composition bias toward polar residues. 5 disordered regions span residues 158 to 203 (AARN…FSTP), 236 to 285 (SAFQ…YGST), 322 to 387 (GAGD…IYNQ), 442 to 461 (PPTN…STPS), and 598 to 629 (TGGS…DNQS). Residues 171–188 (NGTNSNSDNNSTNTNSNN) are compositionally biased toward low complexity. 4 stretches are compositionally biased toward polar residues: residues 189–203 (KPSH…FSTP), 248–279 (FDLS…SQNP), 339–359 (GRSS…NQSP), and 377–387 (GPTNPRNIYNQ). 2 stretches are compositionally biased toward low complexity: residues 442–451 (PPTNTQHQQQ) and 598–619 (TGGS…SRNS). Residues 620-629 (ATTTVMDNQS) show a composition bias toward polar residues.

This sequence belongs to the ERT1/acuK family.

It is found in the nucleus. Its function is as follows. Transcription factor which regulates nonfermentable carbon utilization. Activator of gluconeogenetic genes. This chain is Transcription activator of gluconeogenesis PAAG_01030, found in Paracoccidioides lutzii (strain ATCC MYA-826 / Pb01) (Paracoccidioides brasiliensis).